A 254-amino-acid chain; its full sequence is Imidazole glycerol phosphate synthase subunit HisF (254 aa).

Active-site residues include Asp-11 and Asp-130.

It belongs to the HisA/HisF family. In terms of assembly, heterodimer of HisH and HisF.

It is found in the cytoplasm. It catalyses the reaction 5-[(5-phospho-1-deoxy-D-ribulos-1-ylimino)methylamino]-1-(5-phospho-beta-D-ribosyl)imidazole-4-carboxamide + L-glutamine = D-erythro-1-(imidazol-4-yl)glycerol 3-phosphate + 5-amino-1-(5-phospho-beta-D-ribosyl)imidazole-4-carboxamide + L-glutamate + H(+). It functions in the pathway amino-acid biosynthesis; L-histidine biosynthesis; L-histidine from 5-phospho-alpha-D-ribose 1-diphosphate: step 5/9. Its function is as follows. IGPS catalyzes the conversion of PRFAR and glutamine to IGP, AICAR and glutamate. The HisF subunit catalyzes the cyclization activity that produces IGP and AICAR from PRFAR using the ammonia provided by the HisH subunit. The chain is Imidazole glycerol phosphate synthase subunit HisF from Gloeobacter violaceus (strain ATCC 29082 / PCC 7421).